Reading from the N-terminus, the 309-residue chain is Ribonuclease Z (309 aa).

Zn(2+) is bound by residues His-63, His-65, Asp-67, His-68, His-145, Asp-216, and His-274. The active-site Proton acceptor is Asp-67.

It belongs to the RNase Z family. In terms of assembly, homodimer. Requires Zn(2+) as cofactor.

The catalysed reaction is Endonucleolytic cleavage of RNA, removing extra 3' nucleotides from tRNA precursor, generating 3' termini of tRNAs. A 3'-hydroxy group is left at the tRNA terminus and a 5'-phosphoryl group is left at the trailer molecule.. Functionally, zinc phosphodiesterase, which displays some tRNA 3'-processing endonuclease activity. Probably involved in tRNA maturation, by removing a 3'-trailer from precursor tRNA. The protein is Ribonuclease Z of Streptococcus sanguinis (strain SK36).